An 88-amino-acid chain; its full sequence is Small ribosomal subunit protein bS20 (88 aa).

Belongs to the bacterial ribosomal protein bS20 family.

Functionally, binds directly to 16S ribosomal RNA. This is Small ribosomal subunit protein bS20 from Clostridium botulinum (strain ATCC 19397 / Type A).